A 205-amino-acid chain; its full sequence is Octanoyltransferase (205 aa).

Residues 30–205 (NSADELVWLL…ILKKEFYKIF (176 aa)) enclose the BPL/LPL catalytic domain. Substrate is bound by residues 68–75 (RGGKHTYH), 140–142 (AFG), and 153–155 (GIA). Cys171 (acyl-thioester intermediate) is an active-site residue.

This sequence belongs to the LipB family.

It localises to the cytoplasm. It carries out the reaction octanoyl-[ACP] + L-lysyl-[protein] = N(6)-octanoyl-L-lysyl-[protein] + holo-[ACP] + H(+). The protein operates within protein modification; protein lipoylation via endogenous pathway; protein N(6)-(lipoyl)lysine from octanoyl-[acyl-carrier-protein]: step 1/2. Its function is as follows. Catalyzes the transfer of endogenously produced octanoic acid from octanoyl-acyl-carrier-protein onto the lipoyl domains of lipoate-dependent enzymes. Lipoyl-ACP can also act as a substrate although octanoyl-ACP is likely to be the physiological substrate. The chain is Octanoyltransferase from Wolbachia pipientis wMel.